Here is a 749-residue protein sequence, read N- to C-terminus: Cytosolic phospholipase A2 (749 aa).

The phospholipid binding stretch occupies residues 1-178 (MSFIDPYQHI…MKKLLGPKKS (178 aa)). Serine 2 is modified (phosphoserine). The C2 domain maps to 6–122 (PYQHIIVEHQ…KVGEKKEVPF (117 aa)). Positions 40, 41, 43, 65, 93, 94, and 95 each coordinate Ca(2+). The 601-residue stretch at 140-740 (SCPDLRFSMA…SNVEARRFFN (601 aa)) folds into the PLA2c domain. Serine 228 acts as the Nucleophile in catalysis. Threonine 268 bears the Phosphothreonine mark. The tract at residues 427–456 (KHIVSNDSSDSDDESQEPKGTENEDAERDY) is disordered. Phosphoserine occurs at positions 434, 435, and 437. Serine 505 is subject to Phosphoserine; by MAPK. The residue at position 515 (serine 515) is a Phosphoserine. Lysine 541 participates in a covalent cross-link: Glycyl lysine isopeptide (Lys-Gly) (interchain with G-Cter in SUMO2). Aspartate 549 functions as the Proton acceptor in the catalytic mechanism. Lysine 606 participates in a covalent cross-link: Glycyl lysine isopeptide (Lys-Gly) (interchain with G-Cter in SUMO2). Residues serine 727 and serine 729 each carry the phosphoserine modification.

Interacts with KAT5. In terms of processing, phosphorylated at both Ser-505 and Ser-727 in response to mitogenic stimuli.

The protein resides in the cytoplasm. The protein localises to the golgi apparatus membrane. It localises to the nucleus envelope. The catalysed reaction is a 1,2-diacyl-sn-glycero-3-phosphocholine + H2O = a 1-acyl-sn-glycero-3-phosphocholine + a fatty acid + H(+). It carries out the reaction a 1-O-alkyl-2-acyl-sn-glycero-3-phosphocholine + H2O = a 1-O-alkyl-sn-glycero-3-phosphocholine + a fatty acid + H(+). The enzyme catalyses a 1-acyl-sn-glycero-3-phosphocholine + H2O = sn-glycerol 3-phosphocholine + a fatty acid + H(+). It catalyses the reaction 1-hexadecanoyl-2-(5Z,8Z,11Z,14Z-eicosatetraenoyl)-sn-glycero-3-phosphocholine + H2O = 1-hexadecanoyl-sn-glycero-3-phosphocholine + (5Z,8Z,11Z,14Z)-eicosatetraenoate + H(+). The catalysed reaction is 1,2-di-(5Z,8Z,11Z,14Z-eicosatetraenoyl)-sn-glycero-3-phosphocholine + H2O = 1-(5Z,8Z,11Z,14Z-eicosatetraenoyl)-sn-glycero-3-phosphocholine + (5Z,8Z,11Z,14Z)-eicosatetraenoate + H(+). It carries out the reaction 1-octadecanoyl-2-(5Z,8Z,11Z,14Z-eicosatetraenoyl)-sn-glycero-3-phosphocholine + H2O = 1-octadecanoyl-sn-glycero-3-phosphocholine + (5Z,8Z,11Z,14Z)-eicosatetraenoate + H(+). The enzyme catalyses 1-hexadecanoyl-2-(9Z,12Z-octadecadienoyl)-sn-glycero-3-phosphocholine + H2O = (9Z,12Z)-octadecadienoate + 1-hexadecanoyl-sn-glycero-3-phosphocholine + H(+). It catalyses the reaction 1-octadecanoyl-2-(9Z,12Z,15Z-octadecatrienoyl)-sn-glycero-3-phosphocholine + H2O = (9Z,12Z,15Z)-octadecatrienoate + 1-octadecanoyl-sn-glycero-3-phosphocholine + H(+). The catalysed reaction is 1-(5Z,8Z,11Z,14Z-eicosatetraenoyl)-2-hexadecanoyl-sn-glycero-3-phosphocholine + H2O = 1-(5Z,8Z,11Z,14Z-eicosatetraenoyl)-sn-glycero-3-phosphocholine + hexadecanoate + H(+). It carries out the reaction 1-O-hexadecyl-2-(5Z,8Z,11Z,14Z)-eicosatetraenoyl-sn-glycero-3-phosphocholine + H2O = 1-O-hexadecyl-sn-glycero-3-phosphocholine + (5Z,8Z,11Z,14Z)-eicosatetraenoate + H(+). The enzyme catalyses 1,2-di-(9Z-octadecenoyl)-sn-glycero-3-phospho-(1'-sn-glycerol) + H2O = 1-(9Z-octadecenoyl)-sn-glycero-3-phospho-(1'-sn-glycerol) + (9Z)-octadecenoate + H(+). It catalyses the reaction 1-octadecanoyl-2-(5Z,8Z,11Z,14Z-eicosatetraenoyl)-sn-glycero-3-phosphate + H2O = 1-octadecanoyl-sn-glycero-3-phosphate + (5Z,8Z,11Z,14Z)-eicosatetraenoate + H(+). The catalysed reaction is 1-hexadecanoyl-sn-glycero-3-phosphocholine + H2O = sn-glycerol 3-phosphocholine + hexadecanoate + H(+). It carries out the reaction 2-(prostaglandin E2)-sn-glycero-3-phosphoethanolamine + H2O = sn-glycero-3-phosphoethanolamine + prostaglandin E2 + H(+). The enzyme catalyses 2-[(15S)-hydroxy-(5Z,8Z,11Z,13E)-eicosatetraenoyl]-sn-glycero-3-phosphocholine + H2O = (15S)-hydroxy-(5Z,8Z,11Z,13E)-eicosatetraenoate + sn-glycerol 3-phosphocholine + H(+). It catalyses the reaction 2-[(15R)-hydroxy-(5Z,8Z,11Z,13E)-eicosatetraenoyl]-sn-glycero-3-phosphocholine + H2O = (15R)-hydroxy-(5Z,8Z,11Z,13E)-eicosatetraenoate + sn-glycerol 3-phosphocholine + H(+). The catalysed reaction is 2-(prostaglandin E2)-sn-glycero-3-phosphocholine + H2O = prostaglandin E2 + sn-glycerol 3-phosphocholine + H(+). It carries out the reaction 2-[(11R)-hydroxy-(5Z,8Z,12E,14Z)-eicosatetraenoyl]-sn-glycero-3-phosphocholine + H2O = (11R)-hydroxy-(5Z,8Z,12E,14Z)-eicosatetraenoate + sn-glycerol 3-phosphocholine + H(+). The enzyme catalyses 1-(5Z,8Z,11Z,14Z-eicosatetraenoyl)-2-O-hexadecyl-sn-glycero-3-phosphocholine + H2O = 2-O-hexadecyl-sn-glycero-3-phosphocholine + (5Z,8Z,11Z,14Z)-eicosatetraenoate + H(+). It catalyses the reaction 1-octadecanoyl-2-(5Z,8Z,11Z,14Z-eicosatetraenoyl)-sn-glycero-3-phosphocholine + glycerol = 1-(5Z,8Z,11Z,14Z-eicosatetraenoyl)-glycerol + 1-octadecanoyl-sn-glycero-3-phosphocholine. The catalysed reaction is 1-octadecanoyl-2-(9Z,12Z,15Z-octadecatrienoyl)-sn-glycero-3-phosphocholine + glycerol = 1-(9Z,12Z,15Z-octadecatrienoyl)-glycerol + 1-octadecanoyl-sn-glycero-3-phosphocholine. It participates in membrane lipid metabolism; glycerophospholipid metabolism. Its pathway is lipid metabolism; arachidonate metabolism. The protein operates within lipid metabolism; prostaglandin biosynthesis. It functions in the pathway lipid metabolism; leukotriene B4 biosynthesis. Its activity is regulated as follows. Activated by cytosolic calcium, which is necessary for binding to membrane lipids. Activated by phosphorylation in response to mitogenic stimuli. Has primarily calcium-dependent phospholipase and lysophospholipase activities, with a major role in membrane lipid remodeling and biosynthesis of lipid mediators of the inflammatory response. Plays an important role in embryo implantation and parturition through its ability to trigger prostanoid production. Preferentially hydrolyzes the ester bond of the fatty acyl group attached at sn-2 position of phospholipids (phospholipase A2 activity). Selectively hydrolyzes sn-2 arachidonoyl group from membrane phospholipids, providing the precursor for eicosanoid biosynthesis via the cyclooxygenase pathway. In an alternative pathway of eicosanoid biosynthesis, hydrolyzes sn-2 fatty acyl chain of eicosanoid lysophopholipids to release free bioactive eicosanoids. Hydrolyzes the ester bond of the fatty acyl group attached at sn-1 position of phospholipids (phospholipase A1 activity) only if an ether linkage rather than an ester linkage is present at the sn-2 position. This hydrolysis is not stereospecific. Has calcium-independent phospholipase A2 and lysophospholipase activities in the presence of phosphoinositides. Has O-acyltransferase activity. Catalyzes the transfer of fatty acyl chains from phospholipids to a primary hydroxyl group of glycerol (sn-1 or sn-3), potentially contributing to monoacylglycerol synthesis. The protein is Cytosolic phospholipase A2 (PLA2G4A) of Equus caballus (Horse).